A 492-amino-acid polypeptide reads, in one-letter code: 3-octaprenyl-4-hydroxybenzoate carboxy-lyase (492 aa).

Asparagine 177 serves as a coordination point for Mn(2+). Prenylated FMN-binding positions include 180 to 182, 194 to 196, and 199 to 200; these read IYR, RWL, and RG. Residue glutamate 243 coordinates Mn(2+). Residue aspartate 292 is the Proton donor of the active site.

It belongs to the UbiD family. Homohexamer. Prenylated FMN serves as cofactor. Mn(2+) is required as a cofactor.

Its subcellular location is the cell membrane. It carries out the reaction a 4-hydroxy-3-(all-trans-polyprenyl)benzoate + H(+) = a 2-(all-trans-polyprenyl)phenol + CO2. The protein operates within cofactor biosynthesis; ubiquinone biosynthesis. Its function is as follows. Catalyzes the decarboxylation of 3-octaprenyl-4-hydroxy benzoate to 2-octaprenylphenol, an intermediate step in ubiquinone biosynthesis. The chain is 3-octaprenyl-4-hydroxybenzoate carboxy-lyase from Neisseria meningitidis serogroup B (strain ATCC BAA-335 / MC58).